The following is a 324-amino-acid chain: HSF-like protein (324 aa).

The signal sequence occupies residues 1-19 (MNSLVALVLLGQIIGSTVS). Cystatin fetuin-A-type domains lie at 21–130 (QLGP…VKCS) and 141–254 (RDCP…SDCV). Disulfide bonds link Cys-28/Cys-315, Cys-85/Cys-96, Cys-110/Cys-129, Cys-143/Cys-146, Cys-205/Cys-217, and Cys-230/Cys-253. Asn-95 carries N-linked (GlcNAc...) asparagine glycosylation. An N-linked (GlcNAc...) asparagine glycan is attached at Asn-204. Residue Asn-282 is glycosylated (N-linked (GlcNAc...) asparagine).

Belongs to the fetuin family. As to quaternary structure, homodimer. In terms of tissue distribution, expressed by the liver.

Its subcellular location is the secreted. Its function is as follows. May not have antihemorrhagic activity. This is HSF-like protein from Protobothrops flavoviridis (Habu).